The sequence spans 235 residues: Large ribosomal subunit protein uL1 (235 aa).

The protein belongs to the universal ribosomal protein uL1 family. In terms of assembly, part of the 50S ribosomal subunit.

In terms of biological role, binds directly to 23S rRNA. The L1 stalk is quite mobile in the ribosome, and is involved in E site tRNA release. Functionally, protein L1 is also a translational repressor protein, it controls the translation of the L11 operon by binding to its mRNA. This is Large ribosomal subunit protein uL1 from Corynebacterium diphtheriae (strain ATCC 700971 / NCTC 13129 / Biotype gravis).